The sequence spans 89 residues: MSLDKGTKEEITKKFQLHEKDTGSADVQIAILTEHITELKEHLKRSPKDQNSRLALLKLVGQRRKLLEYLNSTDTERYKNLIARLNLRK.

The protein belongs to the universal ribosomal protein uS15 family. Part of the 30S ribosomal subunit. Forms a bridge to the 50S subunit in the 70S ribosome, contacting the 23S rRNA.

Its function is as follows. One of the primary rRNA binding proteins, it binds directly to 16S rRNA where it helps nucleate assembly of the platform of the 30S subunit by binding and bridging several RNA helices of the 16S rRNA. Forms an intersubunit bridge (bridge B4) with the 23S rRNA of the 50S subunit in the ribosome. This is Small ribosomal subunit protein uS15 from Chlamydia muridarum (strain MoPn / Nigg).